Consider the following 162-residue polypeptide: Lipoprotein signal peptidase (162 aa).

The next 2 membrane-spanning stretches (helical) occupy residues Phe-56–Tyr-76 and Ser-84–Asp-104. Active-site residues include Asp-113 and Asp-139. A helical membrane pass occupies residues Trp-132–Phe-152.

It belongs to the peptidase A8 family.

It is found in the cell inner membrane. It carries out the reaction Release of signal peptides from bacterial membrane prolipoproteins. Hydrolyzes -Xaa-Yaa-Zaa-|-(S,diacylglyceryl)Cys-, in which Xaa is hydrophobic (preferably Leu), and Yaa (Ala or Ser) and Zaa (Gly or Ala) have small, neutral side chains.. The protein operates within protein modification; lipoprotein biosynthesis (signal peptide cleavage). In terms of biological role, this protein specifically catalyzes the removal of signal peptides from prolipoproteins. The polypeptide is Lipoprotein signal peptidase (Chlorobaculum tepidum (strain ATCC 49652 / DSM 12025 / NBRC 103806 / TLS) (Chlorobium tepidum)).